A 450-amino-acid polypeptide reads, in one-letter code: Glutamyl-tRNA reductase (450 aa).

Substrate is bound by residues 50–53 (TCNR), Ser109, 114–116 (EPQ), and Gln120. Cys51 acts as the Nucleophile in catalysis. 189-194 (GAGEMA) contributes to the NADP(+) binding site. Residues 422–450 (NEPEQPEAHKNRKRPQPDLPAGCPGKTIL) form a disordered region.

This sequence belongs to the glutamyl-tRNA reductase family. As to quaternary structure, homodimer.

It carries out the reaction (S)-4-amino-5-oxopentanoate + tRNA(Glu) + NADP(+) = L-glutamyl-tRNA(Glu) + NADPH + H(+). Its pathway is porphyrin-containing compound metabolism; protoporphyrin-IX biosynthesis; 5-aminolevulinate from L-glutamyl-tRNA(Glu): step 1/2. Catalyzes the NADPH-dependent reduction of glutamyl-tRNA(Glu) to glutamate 1-semialdehyde (GSA). This is Glutamyl-tRNA reductase from Oleidesulfovibrio alaskensis (strain ATCC BAA-1058 / DSM 17464 / G20) (Desulfovibrio alaskensis).